A 422-amino-acid polypeptide reads, in one-letter code: Probable zinc-type alcohol dehydrogenase-like protein L498 (422 aa).

Zn(2+) is bound by residues Cys108, His129, Cys160, Cys163, Cys166, Cys174, and Cys231.

The cofactor is Zn(2+).

The protein resides in the host cytoplasm. Its subcellular location is the virion. The sequence is that of Probable zinc-type alcohol dehydrogenase-like protein L498 from Acanthamoeba polyphaga (Amoeba).